Reading from the N-terminus, the 331-residue chain is MKMNTERFNLTVDEYLAETNVLFYLNDAVTQLLEHKEEYTQFGVVRYFAEYFTSVKNGNHVLFREFSYIKATPHNRESFIHIFWKCFRQIGKNGDLLAMSEYSSLLQLLCPDFPAEMVQNTARIVLIDDVTDCLMSFSDFIYSFQIQFFYEEFVESISAIYQDLLSGKNPNTVIVPTSTSVEQLSSSANDKPDVQEGVDATIFCECIEGLCERFKHKYPSTVAIKEILDNTQRVSFYGFLMALAKHEGINQDIGALPNKPDLLIDPEMDQELERLIAQVAISPTSNNNSSSSALGQKEMSKKASPRKSLHQRKRIEMESDGSTEETDSSEN.

The segment at 283–331 (PTSNNNSSSSALGQKEMSKKASPRKSLHQRKRIEMESDGSTEETDSSEN) is disordered. Residues 303–313 (ASPRKSLHQRK) show a composition bias toward basic residues. A compositionally biased stretch (acidic residues) spans 318-331 (ESDGSTEETDSSEN).

This sequence belongs to the CSTPP1 family. In terms of assembly, interacts with PCM1. Interacts with the complex TPGC. Binds to alpha-tubulin. Expression in elevated in ciliated tissues/organs, including brain, spinal cord, kidney, eyes, ears and lateral line.

It localises to the cytoplasm. The protein localises to the cytoskeleton. Its subcellular location is the microtubule organizing center. It is found in the centrosome. The protein resides in the centriolar satellite. Functionally, regulator of the tubulin polyglutamylase complex (TPGC) that controls cytoskeletal organization, nuclear shape, and cilium disassembly by balancing microtubule and actin assembly. Regulates the assembly and stability of the TPGC and thereby modulates polyglutamylation of the microtubule, which antagonizes MAP4 binding. This Danio rerio (Zebrafish) protein is Centriolar satellite-associated tubulin polyglutamylase complex regulator 1 (cstpp1).